The primary structure comprises 244 residues: ATP synthase subunit 4, mitochondrial (244 aa).

A mitochondrion-targeting transit peptide spans 1 to 35; that stretch reads MSMSMGVRGLALRSVSKTLFSQGVRCPSMVIGARY. S144 carries the post-translational modification Phosphoserine.

Belongs to the eukaryotic ATPase B chain family. F-type ATPases have 2 components, CF(1) - the catalytic core - and CF(0) - the membrane proton channel. In yeast, the dimeric form of ATP synthase consists of 17 polypeptides: alpha, beta, gamma, delta, epsilon, 4 (B), 5 (OSCP), 6 (A), 8, 9 (C), d, E (Tim11), f, g, h, i/j and k.

It localises to the mitochondrion. It is found in the mitochondrion inner membrane. Its function is as follows. Mitochondrial membrane ATP synthase (F(1)F(0) ATP synthase or Complex V) produces ATP from ADP in the presence of a proton gradient across the membrane which is generated by electron transport complexes of the respiratory chain. F-type ATPases consist of two structural domains, F(1) - containing the extramembraneous catalytic core, and F(0) - containing the membrane proton channel, linked together by a central stalk and a peripheral stalk. During catalysis, ATP synthesis in the catalytic domain of F(1) is coupled via a rotary mechanism of the central stalk subunits to proton translocation. Part of the complex F(0) domain and the peripheric stalk, which acts as a stator to hold the catalytic alpha(3)beta(3) subcomplex and subunit a/ATP6 static relative to the rotary elements. This Saccharomyces cerevisiae (strain ATCC 204508 / S288c) (Baker's yeast) protein is ATP synthase subunit 4, mitochondrial (ATP4).